We begin with the raw amino-acid sequence, 471 residues long: GTPase Der (471 aa).

2 consecutive EngA-type G domains span residues P5–E168 and I186–F359. Residues G11 to S18, D58 to I62, N120 to D123, G192 to S199, D239 to V243, and N304 to D307 each bind GTP. Residues I360–T444 form the KH-like domain.

It belongs to the TRAFAC class TrmE-Era-EngA-EngB-Septin-like GTPase superfamily. EngA (Der) GTPase family. Associates with the 50S ribosomal subunit.

GTPase that plays an essential role in the late steps of ribosome biogenesis. This Alcanivorax borkumensis (strain ATCC 700651 / DSM 11573 / NCIMB 13689 / SK2) protein is GTPase Der.